Here is a 126-residue protein sequence, read N- to C-terminus: Nascent polypeptide-associated complex protein (126 aa).

The region spanning 10-77 is the NAC-A/B domain; it reads PRMMKQMQKM…AKKVAKAEEK (68 aa).

The protein belongs to the NAC-alpha family. Homodimer. Interacts with the ribosome. Binds ribosomal RNA.

Functionally, contacts the emerging nascent chain on the ribosome. The polypeptide is Nascent polypeptide-associated complex protein (Methanococcus maripaludis (strain C6 / ATCC BAA-1332)).